The chain runs to 191 residues: Putative glutathione-dependent formaldehyde-activating enzyme (191 aa).

One can recognise a CENP-V/GFA domain in the interval 20 to 166 (FPGGNLYCLC…FQSLGLQTYD (147 aa)). Zn(2+) contacts are provided by Cys27, Cys29, Cys48, Cys50, Cys53, Cys95, and Cys98.

The protein belongs to the Gfa family. It depends on Zn(2+) as a cofactor.

It carries out the reaction S-(hydroxymethyl)glutathione = glutathione + formaldehyde. Its pathway is one-carbon metabolism; formaldehyde degradation; formate from formaldehyde (glutathione route): step 1/3. Its function is as follows. Catalyzes the condensation of formaldehyde and glutathione to S-hydroxymethylglutathione. The sequence is that of Putative glutathione-dependent formaldehyde-activating enzyme from Aspergillus flavus (strain ATCC 200026 / FGSC A1120 / IAM 13836 / NRRL 3357 / JCM 12722 / SRRC 167).